The chain runs to 428 residues: UDP-N-acetylglucosamine 1-carboxyvinyltransferase 2 (428 aa).

22–23 (KN) lines the phosphoenolpyruvate pocket. Arginine 92 is a UDP-N-acetyl-alpha-D-glucosamine binding site. Catalysis depends on cysteine 116, which acts as the Proton donor. At cysteine 116 the chain carries 2-(S-cysteinyl)pyruvic acid O-phosphothioketal. Residues 121 to 125 (RPIDQ), aspartate 304, and isoleucine 326 each bind UDP-N-acetyl-alpha-D-glucosamine.

It belongs to the EPSP synthase family. MurA subfamily.

It localises to the cytoplasm. It catalyses the reaction phosphoenolpyruvate + UDP-N-acetyl-alpha-D-glucosamine = UDP-N-acetyl-3-O-(1-carboxyvinyl)-alpha-D-glucosamine + phosphate. It functions in the pathway cell wall biogenesis; peptidoglycan biosynthesis. In terms of biological role, cell wall formation. Adds enolpyruvyl to UDP-N-acetylglucosamine. The chain is UDP-N-acetylglucosamine 1-carboxyvinyltransferase 2 from Geobacillus kaustophilus (strain HTA426).